Reading from the N-terminus, the 1368-residue chain is DNA-directed RNA polymerase subunit beta (1368 aa).

This sequence belongs to the RNA polymerase beta chain family. As to quaternary structure, the RNAP catalytic core consists of 2 alpha, 1 beta, 1 beta' and 1 omega subunit. When a sigma factor is associated with the core the holoenzyme is formed, which can initiate transcription.

It carries out the reaction RNA(n) + a ribonucleoside 5'-triphosphate = RNA(n+1) + diphosphate. Functionally, DNA-dependent RNA polymerase catalyzes the transcription of DNA into RNA using the four ribonucleoside triphosphates as substrates. The chain is DNA-directed RNA polymerase subunit beta from Paraburkholderia phytofirmans (strain DSM 17436 / LMG 22146 / PsJN) (Burkholderia phytofirmans).